The primary structure comprises 965 residues: Sarcosine oxidase subunit alpha (965 aa).

Positions 139, 158, 159, 160, 166, 205, 418, 423, and 425 each coordinate NAD(+). (6R)-5,10-methylene-5,6,7,8-tetrahydrofolate is bound by residues threonine 692 and glutamate 784.

It belongs to the GcvT family. In terms of assembly, heterotetramer composed of subunits alpha (SoxA), beta (SoxB), gamma (SoxG) and delta (SoxD). NAD(+) serves as cofactor.

It localises to the cytoplasm. It catalyses the reaction sarcosine + (6S)-5,6,7,8-tetrahydrofolate + O2 = (6R)-5,10-methylene-5,6,7,8-tetrahydrofolate + glycine + H2O2. It carries out the reaction sarcosine + O2 + H2O = formaldehyde + glycine + H2O2. Its activity is regulated as follows. Inhibited by Zn(2+), Cu(2+), Cd(2+), Hg(2+), Ag(+), p-chloromercuribenzoate (p-CMB), iodoacetamide, N-ethylmaleimide, CN(-), o-phenanthroline and sodium lauryl sulfate. Its function is as follows. In the presence of tetrahydrofolate, catalyzes the oxidative demethylation of sarcosine to yield glycine, 5,10-methylenetetrahydrofolate and hydrogen peroxide. In the absence of tetrahydrofolate, catalyzes the oxidative demethylation of sarcosine to yield glycine, formaldehyde and hydrogen peroxide. Can also use N-methyl-L-alanine and N-ethyl-L-glycine. Is very specific for oxygen as an acceptor. The polypeptide is Sarcosine oxidase subunit alpha (Corynebacterium sp. (strain U-96)).